The following is an 880-amino-acid chain: Kinesin heavy chain (880 aa).

The 324-residue stretch at 4-327 (SIKVVCRFRP…LRFGMRAKAI (324 aa)) folds into the Kinesin motor domain. Residues 85–92 (GQTGAGKS) and 235–242 (GSEKVGKT) each bind ATP. The segment at 388–426 (VSGAKAAAAQTPRPSTPSRLATESRAETPVAERSATPGI) is disordered. Polar residues predominate over residues 399 to 408 (PRPSTPSRLA). A coiled-coil region spans residues 428 to 849 (IDKDEREEFL…QEKLTTASHR (422 aa)).

It belongs to the TRAFAC class myosin-kinesin ATPase superfamily. Kinesin family. Kinesin subfamily.

It is found in the cytoplasm. It localises to the cytoskeleton. Its function is as follows. Kinesin is a microtubule-associated force-producing protein that may play a role in organelle transport. Its motor activity is directed toward the microtubule's plus end. In Botryotinia fuckeliana (Noble rot fungus), this protein is Kinesin heavy chain (klp1).